A 171-amino-acid polypeptide reads, in one-letter code: Sigma intracellular receptor 2 (171 aa).

Topologically, residues 1-6 (MAVCAR) are cytoplasmic. The chain crosses the membrane as a helical span at residues 7-27 (LLEWIFFFYFFSHIPITLLVD). The region spanning 8–153 (LEWIFFFYFF…PYLLVPVLLL (146 aa)) is the EXPERA domain. The Lumenal portion of the chain corresponds to 28–66 (LQAVLPPSLYPQELLDLMKWYTVAFKDHLMANPPPWFKS). The helical transmembrane segment at 67-87 (FVYCEAILQLPFFPVAAYAFF) threads the bilayer. 2 residues coordinate cholesterol: Ile-73 and Gln-75. At 88–97 (KGGCKWIRIP) the chain is on the cytoplasmic side. A helical transmembrane segment spans residues 98-118 (AIVYSAHVATTVIAIIGHILF). Residues 119 to 137 (GEFPKSDVIAPLTQKDRLT) lie on the Lumenal side of the membrane. Residues 138–158 (LVSIYAPYLLVPVLLLLTMLF) traverse the membrane as a helical segment. The Cytoplasmic portion of the chain corresponds to 159–171 (SPRYRQEEKRKRK). Positions 167–171 (KRKRK) match the ER retention motif motif.

This sequence belongs to the TMEM97/sigma-2 receptor family. Homodimer.

Its subcellular location is the rough endoplasmic reticulum membrane. The protein localises to the nucleus membrane. Sigma-2 receptor which contributes to ameliorate dysfunctional cellular processes and slow degenerative progression by regulating cell functions including cholesterol biosynthesis/trafficking, membrane trafficking, autophagy, lipid membrane-bound protein trafficking, and receptor stabilization at the cell surface. Forms a ternary complex with PGRMC1 receptor and low density lipoprotein receptor/LDLR at the plasma membrane, which increases LDLR-mediated LDL cholesterol internalization. Decreases lysosomal sterol transporter NPC1 availability to the cell, probably through NPC1-binding, hence controlling lipid transport, including cholesterol and LBPA, outside of late endosome/lysosome. Binds regio- and stereoselective ligand 20(S)-hydroxycholesterol (20(S)-OHC), thereby linking OHC binding to cholesterol homeostasis. Also able to bind cholesterol. Binds histatin 1 (Hst 1)/HN1 salivary peptide at the ER membrane, which is critical for increasing mitochondria-ER contacts and stimulating Hst1 wound healing properties. May alter the activity of some cytochrome P450 proteins. Although shows homologies with sterol isomerases (EXPERA domain), not able to catalyze sterol isomerization. However, may act as sensors of these molecules. Acts as a quality control factor in the ER, promoting the proteolytic degradation of nonproductive and extramitochondrial precursor proteins in the ER membrane thus removing them from the ER surface. The protein is Sigma intracellular receptor 2 (tmem97) of Xenopus tropicalis (Western clawed frog).